Consider the following 513-residue polypeptide: Gluconokinase (513 aa).

Residues Lys-16, Thr-261, Gly-300, and 412–416 contribute to the ATP site; that span reads GFARS.

The protein belongs to the FGGY kinase family.

It carries out the reaction D-gluconate + ATP = 6-phospho-D-gluconate + ADP + H(+). The protein operates within carbohydrate acid metabolism; D-gluconate degradation. Catabolite repression by gluconate. This Bacillus subtilis (strain 168) protein is Gluconokinase (gntK).